The primary structure comprises 317 residues: uncharacterized protein (317 aa).

7 helical membrane passes run 24-44 (ISII…TGIM), 63-83 (LSIS…SILA), 136-156 (LGVA…ISED), 187-207 (LIPI…IGFF), 229-249 (ILAL…GGFL), 252-272 (GILS…LTFS), and 295-315 (IVMV…AGLL).

The protein to M.jannaschii MJ0880, MJ1556 and MJ1589.

The protein resides in the cell membrane. This is an uncharacterized protein from Methanocaldococcus jannaschii (strain ATCC 43067 / DSM 2661 / JAL-1 / JCM 10045 / NBRC 100440) (Methanococcus jannaschii).